A 139-amino-acid polypeptide reads, in one-letter code: Nuclear transcription factor Y subunit B-4 (139 aa).

Residues 8–14 (LPIANVG) mediate DNA binding. Residues 35–46 (VQECATEFISFV) form a subunit association domain (SAD) region. The segment covering 90–115 (YREAERERTEHNKGSNDSGNEKETNT) has biased composition (basic and acidic residues). The interval 90 to 139 (YREAERERTEHNKGSNDSGNEKETNTRSDVQNQSTKFIRVVEKGSSSSAR) is disordered. The span at 116 to 125 (RSDVQNQSTK) shows a compositional bias: polar residues.

This sequence belongs to the NFYB/HAP3 subunit family. As to quaternary structure, heterotrimeric transcription factor composed of three components, NF-YA, NF-YB and NF-YC. NF-YB and NF-YC must interact and dimerize for NF-YA association and DNA binding. As to expression, expressed in flowers, siliques and young rosettes.

The protein resides in the nucleus. Component of the NF-Y/HAP transcription factor complex. The NF-Y complex stimulates the transcription of various genes by recognizing and binding to a CCAAT motif in promoters. The polypeptide is Nuclear transcription factor Y subunit B-4 (NFYB4) (Arabidopsis thaliana (Mouse-ear cress)).